Reading from the N-terminus, the 498-residue chain is Acetyl-coenzyme A carboxylase carboxyl transferase subunit beta, chloroplastic (498 aa).

The interval 36–59 (SVNEDPIINDMDKDIPSGSDSDNS) is disordered. Positions 231 to 498 (LWVQCENCYG…FFPLNQNSIK (268 aa)) constitute a CoA carboxyltransferase N-terminal domain. 4 residues coordinate Zn(2+): C235, C238, C254, and C257. A C4-type zinc finger spans residues 235-257 (CENCYGLNYKRFLKSKMNICEHC).

This sequence belongs to the AccD/PCCB family. In terms of assembly, acetyl-CoA carboxylase is a heterohexamer composed of biotin carboxyl carrier protein, biotin carboxylase and 2 subunits each of ACCase subunit alpha and ACCase plastid-coded subunit beta (accD). Zn(2+) serves as cofactor.

It localises to the plastid. It is found in the chloroplast stroma. The enzyme catalyses N(6)-carboxybiotinyl-L-lysyl-[protein] + acetyl-CoA = N(6)-biotinyl-L-lysyl-[protein] + malonyl-CoA. Its pathway is lipid metabolism; malonyl-CoA biosynthesis; malonyl-CoA from acetyl-CoA: step 1/1. Component of the acetyl coenzyme A carboxylase (ACC) complex. Biotin carboxylase (BC) catalyzes the carboxylation of biotin on its carrier protein (BCCP) and then the CO(2) group is transferred by the transcarboxylase to acetyl-CoA to form malonyl-CoA. The sequence is that of Acetyl-coenzyme A carboxylase carboxyl transferase subunit beta, chloroplastic from Morus indica (Mulberry).